Consider the following 143-residue polypeptide: NADH-quinone oxidoreductase subunit A (143 aa).

The next 3 membrane-spanning stretches (helical) occupy residues 7–27 (GFGN…GGYL), 63–83 (FYVV…LYPW), and 93–113 (FALF…AYAW).

The protein belongs to the complex I subunit 3 family. As to quaternary structure, NDH-1 is composed of 14 different subunits. Subunits NuoA, H, J, K, L, M, N constitute the membrane sector of the complex.

The protein resides in the cell inner membrane. It carries out the reaction a quinone + NADH + 5 H(+)(in) = a quinol + NAD(+) + 4 H(+)(out). NDH-1 shuttles electrons from NADH, via FMN and iron-sulfur (Fe-S) centers, to quinones in the respiratory chain. The immediate electron acceptor for the enzyme in this species is believed to be a menaquinone. Couples the redox reaction to proton translocation (for every two electrons transferred, four hydrogen ions are translocated across the cytoplasmic membrane), and thus conserves the redox energy in a proton gradient. This is NADH-quinone oxidoreductase subunit A from Chlorobium limicola (strain DSM 245 / NBRC 103803 / 6330).